Reading from the N-terminus, the 250-residue chain is Uridylate kinase (250 aa).

19-22 (KLSG) is an ATP binding site. Glycine 61 is a binding site for UMP. ATP contacts are provided by glycine 62 and arginine 66. UMP contacts are provided by residues aspartate 81 and 142 to 149 (TGNPFFTT). Residues threonine 169, glutamine 170, tyrosine 175, and aspartate 178 each contribute to the ATP site.

Belongs to the UMP kinase family. Homohexamer.

The protein resides in the cytoplasm. It carries out the reaction UMP + ATP = UDP + ADP. It participates in pyrimidine metabolism; CTP biosynthesis via de novo pathway; UDP from UMP (UMPK route): step 1/1. Inhibited by UTP. In terms of biological role, catalyzes the reversible phosphorylation of UMP to UDP. The protein is Uridylate kinase of Rhodospirillum rubrum (strain ATCC 11170 / ATH 1.1.1 / DSM 467 / LMG 4362 / NCIMB 8255 / S1).